We begin with the raw amino-acid sequence, 394 residues long: Mitogen-activated protein kinase 2 (394 aa).

Over residues 1 to 10 (MDGPAQQTDT) the composition is skewed to polar residues. A disordered region spans residues 1 to 27 (MDGPAQQTDTVMAEAAAAQQPAPPSQP). Residues 61–346 (KPPIMPIGKG…VEDALAHPYL (286 aa)) enclose the Protein kinase domain. ATP is bound by residues 67 to 75 (IGKGAYGIV) and lysine 90. Aspartate 187 serves as the catalytic Proton acceptor. Threonine 219 is modified (phosphothreonine). A TXY motif is present at residues 219 to 221 (TEY). Tyrosine 221 carries the phosphotyrosine modification. Residue threonine 224 is modified to Phosphothreonine.

Belongs to the protein kinase superfamily. CMGC Ser/Thr protein kinase family. MAP kinase subfamily. The cofactor is Mg(2+). In terms of processing, activated by cold, wounding and UV-C in a cultivar-dependent manner; phosphorylated at Tyr-221 in cv. Subicho but not in cv. Pungchon. In terms of tissue distribution, expressed constitutively in roots, stems, flowers and fruits of the hot pepper (cv. Subicho).

It carries out the reaction L-seryl-[protein] + ATP = O-phospho-L-seryl-[protein] + ADP + H(+). The catalysed reaction is L-threonyl-[protein] + ATP = O-phospho-L-threonyl-[protein] + ADP + H(+). Activated by threonine and tyrosine phosphorylation. In terms of biological role, protein kinase involved in oxidative stress-mediated and innate immune MAP kinase signaling cascades. In Capsicum annuum (Capsicum pepper), this protein is Mitogen-activated protein kinase 2.